We begin with the raw amino-acid sequence, 411 residues long: S-adenosylmethionine synthase (411 aa).

H15 serves as a coordination point for ATP. D17 serves as a coordination point for Mg(2+). E43 lines the K(+) pocket. E56 and Q99 together coordinate L-methionine. Residues 99–109 (QSQEIAQGVDT) form a flexible loop region. ATP is bound by residues 179-181 (DGK), D260, 266-267 (RK), A283, and K287. D260 contributes to the L-methionine binding site. K291 is a binding site for L-methionine.

This sequence belongs to the AdoMet synthase family. As to quaternary structure, homotetramer; dimer of dimers. The cofactor is Mg(2+). It depends on K(+) as a cofactor.

The protein resides in the cytoplasm. The catalysed reaction is L-methionine + ATP + H2O = S-adenosyl-L-methionine + phosphate + diphosphate. It functions in the pathway amino-acid biosynthesis; S-adenosyl-L-methionine biosynthesis; S-adenosyl-L-methionine from L-methionine: step 1/1. Functionally, catalyzes the formation of S-adenosylmethionine (AdoMet) from methionine and ATP. The overall synthetic reaction is composed of two sequential steps, AdoMet formation and the subsequent tripolyphosphate hydrolysis which occurs prior to release of AdoMet from the enzyme. The polypeptide is S-adenosylmethionine synthase (Corynebacterium jeikeium (strain K411)).